The following is a 78-amino-acid chain: UPF0335 protein A1E_00570 (78 aa).

The protein belongs to the UPF0335 family.

The polypeptide is UPF0335 protein A1E_00570 (Rickettsia canadensis (strain McKiel)).